The following is a 474-amino-acid chain: Glutamate--tRNA ligase (474 aa).

A 'HIGH' region motif is present at residues 9 to 19 (PSPTGLLHMGG). A 'KMSKS' region motif is present at residues 238–242 (KLSKR). Lysine 241 is a binding site for ATP.

The protein belongs to the class-I aminoacyl-tRNA synthetase family. Glutamate--tRNA ligase type 1 subfamily. As to quaternary structure, monomer.

It is found in the cytoplasm. It catalyses the reaction tRNA(Glu) + L-glutamate + ATP = L-glutamyl-tRNA(Glu) + AMP + diphosphate. In terms of biological role, catalyzes the attachment of glutamate to tRNA(Glu) in a two-step reaction: glutamate is first activated by ATP to form Glu-AMP and then transferred to the acceptor end of tRNA(Glu). This is Glutamate--tRNA ligase from Buchnera aphidicola subsp. Cinara cedri (strain Cc).